Here is a 112-residue protein sequence, read N- to C-terminus: Nucleoid-associated protein FTF0810c (112 aa).

The segment at 1–27 (MNFDMSKLMQQAQKMQEQMKKAQQERE) is disordered. The segment covering 17 to 27 (EQMKKAQQERE) has biased composition (basic and acidic residues).

Belongs to the YbaB/EbfC family. Homodimer.

The protein resides in the cytoplasm. Its subcellular location is the nucleoid. Binds to DNA and alters its conformation. May be involved in regulation of gene expression, nucleoid organization and DNA protection. The sequence is that of Nucleoid-associated protein FTF0810c from Francisella tularensis subsp. tularensis (strain FSC 198).